Consider the following 225-residue polypeptide: Ribose-5-phosphate isomerase A (225 aa).

Substrate-binding positions include 27–30 (SGST), 82–85 (DGAD), and 95–98 (KGGG). Catalysis depends on E104, which acts as the Proton acceptor. K122 is a substrate binding site.

Belongs to the ribose 5-phosphate isomerase family. In terms of assembly, homodimer.

It catalyses the reaction aldehydo-D-ribose 5-phosphate = D-ribulose 5-phosphate. Its pathway is carbohydrate degradation; pentose phosphate pathway; D-ribose 5-phosphate from D-ribulose 5-phosphate (non-oxidative stage): step 1/1. Catalyzes the reversible conversion of ribose-5-phosphate to ribulose 5-phosphate. The protein is Ribose-5-phosphate isomerase A of Archaeoglobus fulgidus (strain ATCC 49558 / DSM 4304 / JCM 9628 / NBRC 100126 / VC-16).